The primary structure comprises 141 residues: Large ribosomal subunit protein uL11c (141 aa).

It belongs to the universal ribosomal protein uL11 family. In terms of assembly, part of the ribosomal stalk of the 50S ribosomal subunit. Interacts with L10 and the large rRNA to form the base of the stalk. L10 forms an elongated spine to which L12 dimers bind in a sequential fashion forming a multimeric L10(L12)X complex.

Its subcellular location is the plastid. It localises to the chloroplast. Its function is as follows. Forms part of the ribosomal stalk which helps the ribosome interact with GTP-bound translation factors. The polypeptide is Large ribosomal subunit protein uL11c (Trieres chinensis (Marine centric diatom)).